Consider the following 490-residue polypeptide: Aspartyl/glutamyl-tRNA(Asn/Gln) amidotransferase subunit B (490 aa).

Belongs to the GatB/GatE family. GatB subfamily. As to quaternary structure, heterotrimer of A, B and C subunits.

The catalysed reaction is L-glutamyl-tRNA(Gln) + L-glutamine + ATP + H2O = L-glutaminyl-tRNA(Gln) + L-glutamate + ADP + phosphate + H(+). It catalyses the reaction L-aspartyl-tRNA(Asn) + L-glutamine + ATP + H2O = L-asparaginyl-tRNA(Asn) + L-glutamate + ADP + phosphate + 2 H(+). Allows the formation of correctly charged Asn-tRNA(Asn) or Gln-tRNA(Gln) through the transamidation of misacylated Asp-tRNA(Asn) or Glu-tRNA(Gln) in organisms which lack either or both of asparaginyl-tRNA or glutaminyl-tRNA synthetases. The reaction takes place in the presence of glutamine and ATP through an activated phospho-Asp-tRNA(Asn) or phospho-Glu-tRNA(Gln). This is Aspartyl/glutamyl-tRNA(Asn/Gln) amidotransferase subunit B from Methylorubrum extorquens (strain CM4 / NCIMB 13688) (Methylobacterium extorquens).